Reading from the N-terminus, the 453-residue chain is Ribulose bisphosphate carboxylase large chain (453 aa).

The propeptide occupies 1–2; that stretch reads MS. At proline 3 the chain carries N-acetylproline. At lysine 14 the chain carries N6,N6,N6-trimethyllysine. Substrate-binding residues include asparagine 123 and threonine 173. The active-site Proton acceptor is lysine 175. A substrate-binding site is contributed by lysine 177. 3 residues coordinate Mg(2+): lysine 201, aspartate 203, and glutamate 204. The residue at position 201 (lysine 201) is an N6-carboxylysine. Histidine 294 (proton acceptor) is an active-site residue. The substrate site is built by arginine 295, histidine 327, and serine 379.

It belongs to the RuBisCO large chain family. Type I subfamily. In terms of assembly, heterohexadecamer of 8 large chains and 8 small chains; disulfide-linked. The disulfide link is formed within the large subunit homodimers. Requires Mg(2+) as cofactor. In terms of processing, the disulfide bond which can form in the large chain dimeric partners within the hexadecamer appears to be associated with oxidative stress and protein turnover.

It is found in the plastid. Its subcellular location is the chloroplast. It catalyses the reaction 2 (2R)-3-phosphoglycerate + 2 H(+) = D-ribulose 1,5-bisphosphate + CO2 + H2O. It carries out the reaction D-ribulose 1,5-bisphosphate + O2 = 2-phosphoglycolate + (2R)-3-phosphoglycerate + 2 H(+). Functionally, ruBisCO catalyzes two reactions: the carboxylation of D-ribulose 1,5-bisphosphate, the primary event in carbon dioxide fixation, as well as the oxidative fragmentation of the pentose substrate in the photorespiration process. Both reactions occur simultaneously and in competition at the same active site. In Crucianella angustifolia (Narrow-leaved crosswort), this protein is Ribulose bisphosphate carboxylase large chain.